A 316-amino-acid polypeptide reads, in one-letter code: MAAYIIRRTLMSIPILLGITILSFVIMKAAPGDPMTLMMDPKISQADREQFIEKYGLNDPQYVQYLKWLGNMVQGDFGTSIVRKGTPVSELIMARLPNTLLLMLVSTILALMISIPFGVLSAKRPYSKIDYGITFTSFIGLAIPNFWFGLILIMVLSVNLGWFPTGGVETLNTEFNIFDRIHHLILPAFVLATADMAGLTRYTRSNMLDVLNQDYIRTARAKGFKENRVLFKHGLRNALLPVITIFGLMIPSFIGGSVVVEQIFTWPGLGKLFVDSAFQRDYPVIMAMTVISAVLVVVGNLIADILYAIVDPRIEY.

6 consecutive transmembrane segments (helical) span residues L10 to A30, L100 to L120, F138 to V158, I177 to A197, L240 to V260, and V290 to V310. Positions L96–A303 constitute an ABC transmembrane type-1 domain.

The protein belongs to the binding-protein-dependent transport system permease family. OppBC subfamily.

It localises to the cell membrane. In terms of biological role, this protein is a component of an oligopeptide permease, a binding protein-dependent transport system. This APP system can completely substitute for the OPP system in both sporulation and genetic competence, though, unlike OPP, is incapable of transporting tripeptides. Probably responsible for the translocation of the substrate across the membrane. This chain is Oligopeptide transport system permease protein AppB (appB), found in Bacillus subtilis (strain 168).